A 1071-amino-acid chain; its full sequence is ATP-dependent helicase/deoxyribonuclease subunit B (1071 aa).

This sequence belongs to the helicase family. AddB/RexB type 2 subfamily. In terms of assembly, heterodimer of AddA and RexB. It depends on Mg(2+) as a cofactor.

In terms of biological role, the heterodimer acts as both an ATP-dependent DNA helicase and an ATP-dependent, dual-direction single-stranded exonuclease. Recognizes the chi site generating a DNA molecule suitable for the initiation of homologous recombination. This subunit has 5' -&gt; 3' nuclease activity but not helicase activity. The protein is ATP-dependent helicase/deoxyribonuclease subunit B of Streptococcus pyogenes serotype M3 (strain ATCC BAA-595 / MGAS315).